Reading from the N-terminus, the 96-residue chain is UPF0235 protein YggU (96 aa).

Belongs to the UPF0235 family.

The protein is UPF0235 protein YggU of Salmonella arizonae (strain ATCC BAA-731 / CDC346-86 / RSK2980).